Reading from the N-terminus, the 285-residue chain is 4-hydroxybenzoate octaprenyltransferase (285 aa).

7 helical membrane-spanning segments follow: residues 20-37 (IGIYLVLWPALWALWLAA), 96-116 (FFFVLCLLAFGLVLFLNPFTI), 138-158 (WPQAFLGAAFAWAIPMAFAAI), 166-186 (AWVIFGVTLVWALVYDTAYAV), 211-231 (IIGFFQAIMLLGFLWIGDLFG), 234-254 (WLYYGSVLIAAGFFVYHQYLL), and 262-282 (AFKAFLNNHWVGLVILIGIML).

Belongs to the UbiA prenyltransferase family. Mg(2+) is required as a cofactor.

Its subcellular location is the cell inner membrane. It catalyses the reaction all-trans-octaprenyl diphosphate + 4-hydroxybenzoate = 4-hydroxy-3-(all-trans-octaprenyl)benzoate + diphosphate. It participates in cofactor biosynthesis; ubiquinone biosynthesis. In terms of biological role, catalyzes the prenylation of para-hydroxybenzoate (PHB) with an all-trans polyprenyl group. Mediates the second step in the final reaction sequence of ubiquinone-8 (UQ-8) biosynthesis, which is the condensation of the polyisoprenoid side chain with PHB, generating the first membrane-bound Q intermediate 3-octaprenyl-4-hydroxybenzoate. This chain is 4-hydroxybenzoate octaprenyltransferase, found in Hydrogenovibrio crunogenus (strain DSM 25203 / XCL-2) (Thiomicrospira crunogena).